The following is a 383-amino-acid chain: tRNA-specific 2-thiouridylase MnmA (383 aa).

Residues 9-16 and methionine 35 contribute to the ATP site; that span reads GMSGGVDS. Residues 95–97 form an interaction with target base in tRNA region; sequence NPD. The Nucleophile role is filled by cysteine 100. The cysteines at positions 100 and 196 are disulfide-linked. ATP is bound at residue glycine 124. The interaction with tRNA stretch occupies residues 146–148; it reads KDQ. Cysteine 196 acts as the Cysteine persulfide intermediate in catalysis. Positions 308–309 are interaction with tRNA; that stretch reads RY.

Belongs to the MnmA/TRMU family.

The protein resides in the cytoplasm. It catalyses the reaction S-sulfanyl-L-cysteinyl-[protein] + uridine(34) in tRNA + AH2 + ATP = 2-thiouridine(34) in tRNA + L-cysteinyl-[protein] + A + AMP + diphosphate + H(+). In terms of biological role, catalyzes the 2-thiolation of uridine at the wobble position (U34) of tRNA, leading to the formation of s(2)U34. This is tRNA-specific 2-thiouridylase MnmA from Burkholderia mallei (strain NCTC 10247).